Consider the following 228-residue polypeptide: Uracil-DNA glycosylase (228 aa).

Aspartate 64 serves as the catalytic Proton acceptor.

The protein belongs to the uracil-DNA glycosylase (UDG) superfamily. UNG family.

The protein localises to the cytoplasm. It carries out the reaction Hydrolyzes single-stranded DNA or mismatched double-stranded DNA and polynucleotides, releasing free uracil.. Functionally, excises uracil residues from the DNA which can arise as a result of misincorporation of dUMP residues by DNA polymerase or due to deamination of cytosine. In Yersinia pestis bv. Antiqua (strain Antiqua), this protein is Uracil-DNA glycosylase.